The sequence spans 157 residues: Pyruvoyl-dependent arginine decarboxylase (157 aa).

Ser44 is modified (pyruvic acid (Ser)).

The protein belongs to the PdaD family. Requires pyruvate as cofactor.

The catalysed reaction is L-arginine + H(+) = agmatine + CO2. The protein is Pyruvoyl-dependent arginine decarboxylase of Thermococcus kodakarensis (strain ATCC BAA-918 / JCM 12380 / KOD1) (Pyrococcus kodakaraensis (strain KOD1)).